The chain runs to 657 residues: DNA mismatch repair protein MutL (657 aa).

Belongs to the DNA mismatch repair MutL/HexB family.

Functionally, this protein is involved in the repair of mismatches in DNA. It is required for dam-dependent methyl-directed DNA mismatch repair. May act as a 'molecular matchmaker', a protein that promotes the formation of a stable complex between two or more DNA-binding proteins in an ATP-dependent manner without itself being part of a final effector complex. This is DNA mismatch repair protein MutL from Streptococcus agalactiae serotype Ia (strain ATCC 27591 / A909 / CDC SS700).